The primary structure comprises 457 residues: Argininosuccinate lyase (457 aa).

Belongs to the lyase 1 family. Argininosuccinate lyase subfamily.

It is found in the cytoplasm. It catalyses the reaction 2-(N(omega)-L-arginino)succinate = fumarate + L-arginine. Its pathway is amino-acid biosynthesis; L-arginine biosynthesis; L-arginine from L-ornithine and carbamoyl phosphate: step 3/3. The sequence is that of Argininosuccinate lyase from Escherichia fergusonii (strain ATCC 35469 / DSM 13698 / CCUG 18766 / IAM 14443 / JCM 21226 / LMG 7866 / NBRC 102419 / NCTC 12128 / CDC 0568-73).